Consider the following 62-residue polypeptide: Photosystem II reaction center protein Z (62 aa).

Transmembrane regions (helical) follow at residues 8–28 and 41–61; these read ALLL…VLYA and LVGG…NYFV.

The protein belongs to the PsbZ family. As to quaternary structure, PSII is composed of 1 copy each of membrane proteins PsbA, PsbB, PsbC, PsbD, PsbE, PsbF, PsbH, PsbI, PsbJ, PsbK, PsbL, PsbM, PsbT, PsbX, PsbY, PsbZ, Psb30/Ycf12, peripheral proteins PsbO, CyanoQ (PsbQ), PsbU, PsbV and a large number of cofactors. It forms dimeric complexes.

Its subcellular location is the cellular thylakoid membrane. In terms of biological role, may control the interaction of photosystem II (PSII) cores with the light-harvesting antenna, regulates electron flow through the 2 photosystem reaction centers. PSII is a light-driven water plastoquinone oxidoreductase, using light energy to abstract electrons from H(2)O, generating a proton gradient subsequently used for ATP formation. In Synechococcus elongatus (strain ATCC 33912 / PCC 7942 / FACHB-805) (Anacystis nidulans R2), this protein is Photosystem II reaction center protein Z.